Consider the following 243-residue polypeptide: MIVGEDQLWGRRALEFVDSVERLEAPALISRFESLIASCGFTAYIMAGLPSRNAGLPELTLANGWPRDWFDLYVSENFSAVDPVPRHGATTVHPFVWSDAPYDRDRDPAAHRVMTRAAEFGLVEGYCIPLHYDDGSAAISMAGKDPDLSPAARGAMQLVSIYAHSRLRALSRPKPIRRNRLTPRECEILQWAAQGKTAWEISVILCITERTVKFHLIEAARKLDAANRTAAVAKALTLGLIRL.

An HTH luxR-type domain is found at 174-239 (KPIRRNRLTP…AAVAKALTLG (66 aa)). The segment at residues 198 to 217 (AWEISVILCITERTVKFHLI) is a DNA-binding region (H-T-H motif).

The protein belongs to the autoinducer-regulated transcriptional regulatory protein family.

Functionally, responds to the quorum-sensing autoinducer 4-coumaroyl-homoserine lactone to regulate expression of several genes. Represses expression of rpaI in the absence of the inducer. The chain is HTH-type quorum sensing-dependent transcriptional regulator RpaR from Rhodopseudomonas palustris (strain ATCC BAA-98 / CGA009).